The following is a 230-amino-acid chain: Orotidine 5'-phosphate decarboxylase (230 aa).

Substrate contacts are provided by residues Asp10, Lys31, 58–67 (DLKLHDIPNT), Thr117, Arg179, Gln188, Gly208, and Arg209. Lys60 serves as the catalytic Proton donor.

It belongs to the OMP decarboxylase family. Type 1 subfamily. As to quaternary structure, homodimer.

The enzyme catalyses orotidine 5'-phosphate + H(+) = UMP + CO2. It participates in pyrimidine metabolism; UMP biosynthesis via de novo pathway; UMP from orotate: step 2/2. Catalyzes the decarboxylation of orotidine 5'-monophosphate (OMP) to uridine 5'-monophosphate (UMP). This chain is Orotidine 5'-phosphate decarboxylase, found in Staphylococcus epidermidis (strain ATCC 12228 / FDA PCI 1200).